The sequence spans 110 residues: QGDKRDICRLPPEQGPCKGRIPRYFYNPASRMCESFIYGGCKGNKNNFKTKAECVRACRPPERPGVCPKTSGPGICLHGCDSDSDCKEGQKCCFDGCGYICLTVAPSGSP.

The residue at position 1 (glutamine 1) is a Pyrrolidone carboxylic acid. The 51-residue stretch at 8–58 (CRLPPEQGPCKGRIPRYFYNPASRMCESFIYGGCKGNKNNFKTKAECVRAC) folds into the BPTI/Kunitz inhibitor domain. Intrachain disulfides connect cysteine 8/cysteine 58, cysteine 17/cysteine 41, cysteine 33/cysteine 54, cysteine 67/cysteine 92, cysteine 76/cysteine 97, cysteine 80/cysteine 93, and cysteine 86/cysteine 101. Positions 60–105 (PPERPGVCPKTSGPGICLHGCDSDSDCKEGQKCCFDGCGYICLTVA) constitute a WAP domain.

The first domain inhibits trypsin; the second one inhibitis subtilisin. This Caretta caretta (Loggerhead sea turtle) protein is Chelonianin.